Here is a 1099-residue protein sequence, read N- to C-terminus: 1-phosphatidylinositol 4,5-bisphosphate phosphodiesterase 1 (1099 aa).

The segment covering 1 to 10 (MLESLNRRNS) has biased composition (basic and acidic residues). Disordered stretches follow at residues 1-109 (MLES…SSTT) and 128-164 (ESRSIVSNNGGSPMSDSTTVTSTLSTDTAPKRGKSIQ). Composition is skewed to low complexity over residues 43 to 66 (PPKSQLLLRKSSSPSSYSPIKSDL) and 86 to 109 (PKQQSSLSSSSSSSSSSNTKSSTT). Over residues 131-141 (SIVSNNGGSPM) the composition is skewed to polar residues. The segment covering 142–155 (SDSTTVTSTLSTDT) has biased composition (low complexity). In terms of domain architecture, PI-PLC X-box spans 566 to 726 (YDYPLNEYFI…LKHKFIIKVK (161 aa)). Residues histidine 579 and histidine 642 contribute to the active site. 2 residues coordinate substrate: lysine 724 and lysine 726. Residues 742-780 (FTTSTTTTTTTTTTTTTATSLSEDNENNKSNSSSTSSFI) are disordered. A compositionally biased stretch (low complexity) spans 743–778 (TTSTTTTTTTTTTTTTATSLSEDNENNKSNSSSTSS). The 119-residue stretch at 794-912 (ELSNLGIYTQ…GYVLKPSVLR (119 aa)) folds into the PI-PLC Y-box domain. Positions 823 and 852 each coordinate substrate. The C2 domain occupies 917–1071 (KSSSSNVDTR…QGYRYIYLND (155 aa)).

The enzyme catalyses a 1,2-diacyl-sn-glycero-3-phospho-(1D-myo-inositol-4,5-bisphosphate) + H2O = 1D-myo-inositol 1,4,5-trisphosphate + a 1,2-diacyl-sn-glycerol + H(+). Its function is as follows. The production of the second messenger molecules diacylglycerol (DAG) and inositol 1,4,5-trisphosphate (IP3) is mediated by activated phosphatidylinositol-specific phospholipase C enzymes. This is 1-phosphatidylinositol 4,5-bisphosphate phosphodiesterase 1 (PLC1) from Candida albicans (Yeast).